Reading from the N-terminus, the 118-residue chain is MARVKRGVTSHARHKKVLELAKGYRGRSSTNYRIALERVEKALRYAYRDRRNKKRDFRALWIQRINAAVREHGLTYSRFINGLDKAGIEIDRKVLAAIAFDDSAAFGEIVKKAQAALG.

Belongs to the bacterial ribosomal protein bL20 family.

Functionally, binds directly to 23S ribosomal RNA and is necessary for the in vitro assembly process of the 50S ribosomal subunit. It is not involved in the protein synthesizing functions of that subunit. The sequence is that of Large ribosomal subunit protein bL20 from Gluconobacter oxydans (strain 621H) (Gluconobacter suboxydans).